The following is a 146-amino-acid chain: 3-hydroxyacyl-[acyl-carrier-protein] dehydratase FabZ (146 aa).

Histidine 49 is an active-site residue.

The protein belongs to the thioester dehydratase family. FabZ subfamily.

It localises to the cytoplasm. The enzyme catalyses a (3R)-hydroxyacyl-[ACP] = a (2E)-enoyl-[ACP] + H2O. Functionally, involved in unsaturated fatty acids biosynthesis. Catalyzes the dehydration of short chain beta-hydroxyacyl-ACPs and long chain saturated and unsaturated beta-hydroxyacyl-ACPs. In Pseudomonas putida (strain ATCC 700007 / DSM 6899 / JCM 31910 / BCRC 17059 / LMG 24140 / F1), this protein is 3-hydroxyacyl-[acyl-carrier-protein] dehydratase FabZ.